A 223-amino-acid polypeptide reads, in one-letter code: Large ribosomal subunit protein bL21 (223 aa).

Belongs to the bacterial ribosomal protein bL21 family. As to quaternary structure, part of the 50S ribosomal subunit. Contacts protein L20.

Functionally, this protein binds to 23S rRNA in the presence of protein L20. In Mesorhizobium japonicum (strain LMG 29417 / CECT 9101 / MAFF 303099) (Mesorhizobium loti (strain MAFF 303099)), this protein is Large ribosomal subunit protein bL21.